The sequence spans 246 residues: UDP-N-acetyl-D-mannosaminuronic acid transferase (246 aa).

Belongs to the glycosyltransferase 26 family.

The enzyme catalyses UDP-N-acetyl-alpha-D-mannosaminouronate + N-acetyl-alpha-D-glucosaminyl-di-trans,octa-cis-undecaprenyl diphosphate = beta-D-ManNAcA-(1-&gt;4)-alpha-D-GlcNAc-di-trans,octa-cis-undecaprenyl diphosphate + UDP + H(+). It functions in the pathway bacterial outer membrane biogenesis; enterobacterial common antigen biosynthesis. Catalyzes the synthesis of Und-PP-GlcNAc-ManNAcA (Lipid II), the second lipid-linked intermediate involved in enterobacterial common antigen (ECA) synthesis. This chain is UDP-N-acetyl-D-mannosaminuronic acid transferase, found in Klebsiella pneumoniae (strain 342).